The following is a 260-amino-acid chain: Cytosolic Fe-S cluster assembly factor Nubp2 homolog 1 (260 aa).

An ATP-binding site is contributed by 14–21 (GKGGVGKS). [4Fe-4S] cluster is bound by residues C188 and C191.

Belongs to the Mrp/NBP35 ATP-binding proteins family. NUBP2/CFD1 subfamily. As to quaternary structure, heterotetramer of 2 Nubp1 and 2 Nubp2 chains. It depends on [4Fe-4S] cluster as a cofactor.

It is found in the cytoplasm. Its function is as follows. Component of the cytosolic iron-sulfur (Fe/S) protein assembly (CIA) machinery. Required for maturation of extramitochondrial Fe-S proteins. The Nubp1-Nubp2 heterotetramer forms a Fe-S scaffold complex, mediating the de novo assembly of an Fe-S cluster and its transfer to target apoproteins. In Drosophila yakuba (Fruit fly), this protein is Cytosolic Fe-S cluster assembly factor Nubp2 homolog 1.